A 514-amino-acid chain; its full sequence is Serine--tRNA ligase, cytoplasmic (514 aa).

Residue M1 is modified to N-acetylmethionine. The segment at 9–61 (RVDKGGDPALIRETQEKRFKDPGLVDQLVKADSEWRRCRFRADNLNKLKNLCS) is interaction with tRNA. Position 241 is a phosphoserine (S241). 2 residues coordinate L-serine: T271 and R302. ATP-binding positions include 302–304 (RQE) and 318–321 (VHQF). The residue at position 323 (K323) is an N6-acetyllysine. L-serine is bound at residue E325. 391-394 (ELVS) is an ATP binding site. N427 serves as a coordination point for L-serine. The interval 472-514 (KPAPIDQEPSKKQKKQHEGSKKKAAARDVTLENRLQNMEVTDA) is disordered. Residues 479 to 502 (EPSKKQKKQHEGSKKKAAARDVTL) show a composition bias toward basic and acidic residues. The Nuclear localization signal signature appears at 482–494 (KKQKKQHEGSKKK). Residues 504–514 (NRLQNMEVTDA) are compositionally biased toward polar residues.

The protein belongs to the class-II aminoacyl-tRNA synthetase family. Type-1 seryl-tRNA synthetase subfamily. In terms of assembly, homodimer. The tRNA molecule may bind across the dimer. Interacts with SIRT2. Interacts with METTL6; interaction is required for the tRNA N(3)-methylcytidine methyltransferase activity of METTL6.

Its subcellular location is the cytoplasm. It localises to the nucleus. The catalysed reaction is tRNA(Ser) + L-serine + ATP = L-seryl-tRNA(Ser) + AMP + diphosphate + H(+). It carries out the reaction tRNA(Sec) + L-serine + ATP = L-seryl-tRNA(Sec) + AMP + diphosphate + H(+). The protein operates within aminoacyl-tRNA biosynthesis; selenocysteinyl-tRNA(Sec) biosynthesis; L-seryl-tRNA(Sec) from L-serine and tRNA(Sec): step 1/1. Catalyzes the attachment of serine to tRNA(Ser) in a two-step reaction: serine is first activated by ATP to form Ser-AMP and then transferred to the acceptor end of tRNA(Ser). Is probably also able to aminoacylate tRNA(Sec) with serine, to form the misacylated tRNA L-seryl-tRNA(Sec), which will be further converted into selenocysteinyl-tRNA(Sec). In the nucleus, binds to the VEGFA core promoter and prevents MYC binding and transcriptional activation by MYC. Recruits SIRT2 to the VEGFA promoter, promoting deacetylation of histone H4 at 'Lys-16' (H4K16). Thereby, inhibits the production of VEGFA and sprouting angiogenesis mediated by VEGFA. The chain is Serine--tRNA ligase, cytoplasmic (SARS1) from Oryctolagus cuniculus (Rabbit).